We begin with the raw amino-acid sequence, 562 residues long: NRAMP-like transporter smf-1 (562 aa).

The Cytoplasmic portion of the chain corresponds to 1 to 55; that stretch reads MASSNNDGPIEPEAEPWRITQNDHLEQDLLEEDAESQERVDIPVDDVEKAFSFKK. The helical transmembrane segment at 56 to 76 threads the bilayer; that stretch reads LWAFTGPGFLMSIAYLDPGNI. The Extracellular portion of the chain corresponds to 77-83; that stretch reads ESDLQSG. The chain crosses the membrane as a helical span at residues 84-104; that stretch reads AQAAYKLLWVLLSAHIIGMLL. The Cytoplasmic portion of the chain corresponds to 105-140; that stretch reads QRMSARLGVVSGKHMAEVAYQFYPRLPRIILWLMIE. A helical membrane pass occupies residues 141 to 161; sequence IAIVCSDMQEVIGTAIAIFLL. Residues 162 to 164 lie on the Extracellular side of the membrane; it reads SKG. Residues 165-185 form a helical membrane-spanning segment; it reads FVPLYVGVFITILDTFTFLLI. The Cytoplasmic portion of the chain corresponds to 186 to 194; it reads DRYGIRKLE. Residues 195–215 form a helical membrane-spanning segment; that stretch reads LIFGFLILTMTVSFGYEFVVV. The Extracellular portion of the chain corresponds to 216–241; it reads KPPIGEVISGMVVPWCAGCGKGEFMQ. A helical membrane pass occupies residues 242 to 262; that stretch reads AISVVGAVIMPHNLYLHSALV. Residues 263-287 lie on the Cytoplasmic side of the membrane; that stretch reads KSRRVDRKDRRRVAEANKYFTLESA. A helical transmembrane segment spans residues 288-308; sequence IALFLSFFINLFVVAVFAHGL. The Extracellular segment spans residues 309–347; the sequence is YQKTNADVREMCIARHDIPDADIFPNNTEPVEVDIYKGG. An N-linked (GlcNAc...) asparagine glycan is attached at N334. The helical transmembrane segment at 348 to 368 threads the bilayer; that stretch reads IYLGCQFGAIAMFIWGIGIFA. The Cytoplasmic segment spans residues 369 to 398; that stretch reads AGQSSTMTGTYTGQFVMEGFVKIEWPKWKR. The chain crosses the membrane as a helical span at residues 399–419; sequence VLITRAIAITPTLVLTFYSQG. Residues 420–428 lie on the Extracellular side of the membrane; the sequence is VQNLTGMND. Residue N422 is glycosylated (N-linked (GlcNAc...) asparagine). Residues 429-449 form a helical membrane-spanning segment; that stretch reads FLNCVQMIQLPFALIPIITFT. Topologically, residues 450 to 462 are cytoplasmic; that stretch reads SSRKIMHDFRSSK. Residues 463–483 traverse the membrane as a helical segment; the sequence is VFQIFALITSALILSINVYFI. Residues 484–496 are Extracellular-facing; it reads SDYVFSRLGSEWY. The helical transmembrane segment at 497 to 517 threads the bilayer; that stretch reads IIMVLAPITFAYVLFVLYLAL. The Cytoplasmic portion of the chain corresponds to 518-562; the sequence is YCLVSCEIIPDTVSIRGFSFNKSYENDAPWLAVDSSAVHDNAGYQ.

The protein belongs to the NRAMP family. As to expression, expressed in dopaminergic neurons (at protein level). Expressed predominantly in anterior and posterior intestine, rectal gland cell, H-shaped excretory cell, vulva cells, proximal uterus and spermatheca in adults. Weakly expressed in hyp7 hypodermis, pharyngeal muscles and some anterior sensory, ring and posterior head neurons in adults. Expressed in the anchor cell at the larval stage.

It is found in the apical cell membrane. It localises to the cytoplasmic vesicle membrane. In terms of biological role, probable divalent metal ion transporter which regulates Mn(2+) uptake. The polypeptide is NRAMP-like transporter smf-1 (smf-1) (Caenorhabditis elegans).